A 1123-amino-acid polypeptide reads, in one-letter code: Probable serine/threonine-protein kinase nek3 (1123 aa).

The region spanning 4 to 264 (YEEIKTIGKG…VNDILELPFI (261 aa)) is the Protein kinase domain. ATP is bound by residues 10–18 (IGKGSFGRA) and K33. Catalysis depends on D130, which acts as the Proton acceptor. Composition is skewed to low complexity over residues 283 to 307 (NNDSLNISNNSSGSNNSASNNISSS) and 327 to 415 (NNNN…TSLK). 6 disordered regions span residues 283 to 310 (NNDSLNISNNSSGSNNSASNNISSSTEV), 325 to 415 (NINN…TSLK), 440 to 802 (SKTP…TNSQ), 866 to 887 (SASTASTASTTNTTLTSGTNTM), 908 to 937 (SVKLSSKSSSPIKTSSSSSSSSSSSSSITD), and 990 to 1020 (SLNNSLTSSSSSIITNQNNQNNQNNQNNQNN). The segment covering 440–459 (SKTPISGTKNPTTSKITPSI) has biased composition (polar residues). 4 stretches are compositionally biased toward low complexity: residues 478 to 529 (SKPT…SSSV), 557 to 576 (SNLSSQISSSSSSSSSSNSQ), 588 to 617 (SPTSTSTKSPTNPSPTLSSSSSLPKSSLKS), and 642 to 653 (NGNSNVNSTVLN). Positions 654–665 (RSVSSLSIQHKP) are enriched in polar residues. Composition is skewed to low complexity over residues 666-696 (TNSGSSSISSSSSGNNSNSNTTTNNNTTSTT), 712-738 (STPTSISTSNKSTTTTPTSSRSNTPST), and 752-802 (SSNG…TNSQ). Over residues 908–935 (SVKLSSKSSSPIKTSSSSSSSSSSSSSI) the composition is skewed to low complexity.

Belongs to the protein kinase superfamily. NEK Ser/Thr protein kinase family. NIMA subfamily.

The enzyme catalyses L-seryl-[protein] + ATP = O-phospho-L-seryl-[protein] + ADP + H(+). It catalyses the reaction L-threonyl-[protein] + ATP = O-phospho-L-threonyl-[protein] + ADP + H(+). The sequence is that of Probable serine/threonine-protein kinase nek3 (nek3) from Dictyostelium discoideum (Social amoeba).